The sequence spans 633 residues: Extracellular metalloproteinase 3 (633 aa).

The signal sequence occupies residues methionine 1 to alanine 18. The propeptide occupies tyrosine 19–serine 246. Asparagine 410 is a glycosylation site (N-linked (GlcNAc...) asparagine). Zn(2+) is bound at residue histidine 429. Residue glutamate 430 is part of the active site. Histidine 433 serves as a coordination point for Zn(2+). N-linked (GlcNAc...) asparagine glycosylation is found at asparagine 480 and asparagine 622.

It belongs to the peptidase M36 family. Requires Zn(2+) as cofactor.

It localises to the secreted. In terms of biological role, secreted metalloproteinase probably acting as a virulence factor. This is Extracellular metalloproteinase 3 (MEP3) from Trichophyton rubrum (Athlete's foot fungus).